The sequence spans 704 residues: MADDQERDLQRFLENVDEITSLIQEMNSDDPFIQQKAVLDSEKKLLLMEREQEEDGCRTTLNKTMISPPQTPENADEMSPDAFLASVEKDAKERAKRRRENRVLADALKEKGNEAFVRGDYETAIFFYSEGLGKLKDMKVLYTNRAQAFIKLGDYQKALVDCDWALKCDENCTKAYFHMGKAHVALKNYSKAKECYQKIEEINPKLKAQVKEHLNQVTLREKADLQEKEAQESLDSGKNTAVTTKNLLETLSKPGQTPLFYAGGIEILTEMMADCTERTLFRTYGGFSTISDHEVIRRCLFLTGKDAVEEVLCVSVLKLWQEVCVDNEENQRLLVTHPDMARLLPSFMTSRILVIQQQSLDLLLQLTQTENGRNQVIKHLDMTQLCEALLSFLAFSDKKANTAIGILTDLALEERFQVWFQTNLPDVLPALTGALNREPKITSPSALCQCIALLGNISAEPTARKHMIAHEEFGNACLDLLVKCEEDMDLFREITYTLLGLIMNLCLEITFLSEMWVVKMSRKCLSLLNSKDGGILTRAAGVLSRTLSSSQTIVEEALTAGVVKKMIKFLRMGGQTASRYAIKILAICTNSCHAAREEVVRLDKKFDLLMLLLASEDEILAGNAALCLGNCMEVPSAAPSLLKTDIVRVLLKLAGSDSKETGVQLNAGIALGKLCTAEPRFAAQLRELHGIQVLNSTMKHLNDS.

A Phosphothreonine modification is found at T71. TPR repeat units follow at residues A105 to M138, K139 to C172, and T173 to L206.

The protein resides in the cytoplasm. Its function is as follows. Cytoplasmic protein that plays a role in the proper assembly of dynein arm complexes in motile cilia in both respiratory cells and sperm flagella. This is Tetratricopeptide repeat protein 12 (Ttc12) from Mus musculus (Mouse).